The following is a 503-amino-acid chain: MEEFQGYLELDRSRQHDFLYPLLFREYIYALAHDHGLNKSILSENVGYGNKSSSIIVKRLITRMYQQNPLIFSANDSIQNQFFGHNKNLYSQIISEGFAVIVEIRFSLLLVSFLERKEIAKSQNLQSIHSIFPFLEVKFSHLDYVSDVLIPYHIHLEILVQTLRYWVKDASSLHLLRFFLHEYWNTLITPKKYITLFSKGNPRFFLFLYNSHICEYESVFXFXRNKSSHLWSTSSGIFXXRIYFYVKIEHXVKVFFDNDFQCILWFFKDPFMHYVRYQGKSIXASKDTPLLMNKWKYYLVNLWQYHFYXXFQPGRININQLCKYSLDFLGYRSSLXLXSSVVRSQMLENLXIINNAMKKFXXXVPIIPLIGSLSKANFXNTLGHPISKPTRSDXSDSDIINRFLRICRNLSHYHSGSSKKKSLYRVKYILRLSCVKTLARKHKITIRTFLKKSGSEFLEEFLTEEEVVLSLIFPRTYSTSRRLYREQSWXLDITSINDLVNYE.

Belongs to the intron maturase 2 family. MatK subfamily.

The protein resides in the plastid. Its subcellular location is the chloroplast. Its function is as follows. Usually encoded in the trnK tRNA gene intron. Probably assists in splicing its own and other chloroplast group II introns. The sequence is that of Maturase K from Backhousia myrtifolia (Grey myrtle).